The primary structure comprises 618 residues: Cell pattern formation-associated protein STU1 (618 aa).

Positions 13–28 (MSAGPTQQPPTVTSYN) are enriched in polar residues. Positions 13–105 (MSAGPTQQPP…FDTSGQIAPP (93 aa)) are disordered. The span at 48-59 (YGGYPYTNGMPS) shows a compositional bias: low complexity. Over residues 91-101 (NQYSGFDTSGQ) the composition is skewed to polar residues. Positions 110-216 (RVTATLWEDE…HNISALLYHP (107 aa)) constitute an HTH APSES-type domain. The segment at residues 144-165 (GTKLLNVAGMTRGRRDGILKSE) is a DNA-binding region (H-T-H motif). 2 disordered regions span residues 229-355 (AERR…YDGS) and 390-618 (SEMG…SRRR). Polar residues-rich tracts occupy residues 256–266 (MSQNGSQSLSG), 284–298 (TSASSAVNMGSSDSF), 305–326 (AMSNGQQNPMSIDTSLSNTRSM), and 336–355 (GSTLQSMQAYPPASQSYDGS). Residues 438 to 451 (DHEHDPEYTHDSRT) show a composition bias toward basic and acidic residues. Residues 452-476 (YDNSQSQYNYTAPPVSSISSEQAHV) show a composition bias toward polar residues. A compositionally biased stretch (low complexity) spans 494–512 (PRSAAAPQAYYQQAYSTSP). Positions 513–563 (RSATHQSTSNLYNVMSNDRGSTTNGSANGDVYSQSTDLSNGYATPVTNGNA) are enriched in polar residues. The segment at 566–588 (KRGRDDDDDRSSSSGQMDLKRRK) is nuclear localization domain.

This sequence belongs to the EFG1/PHD1/stuA family.

The protein resides in the nucleus. Functionally, transcription factor that regulates asexual reproduction. Binds the StuA-response elements (StRE) with the consensus sequence 5'-(A/T)CGCG(T/A)N(A/C)-3' at the promoters of target genes. Required for appressorium-mediated infection of rice leaves due to its involvement in the mobilization of lipids and glycogen. The chain is Cell pattern formation-associated protein STU1 from Pyricularia oryzae (strain 70-15 / ATCC MYA-4617 / FGSC 8958) (Rice blast fungus).